Here is a 229-residue protein sequence, read N- to C-terminus: MTNEIRAIFDRIAPVYDQLNDWLSLGQHRIWKEMAIKWTGAKPGDTCLDLCCGSGDLALRLARRVGSTGQVYGVDFSANLLETAKQRAQAQYPQPHISWVEANVLDLPFEDNQFDAATMGYGLRNVTDIPRSLQELRRVLKPNAKAAILDFHRPNNQQFRTFQQWYLDSIVVPLADRLGVKEEYAYISPSLDRFPIGKEQVEIALQVGFTSATHYPIANGMMGVLIISK.

This sequence belongs to the class I-like SAM-binding methyltransferase superfamily. MenG/UbiE family.

It catalyses the reaction demethylphylloquinol + S-adenosyl-L-methionine = phylloquinol + S-adenosyl-L-homocysteine + H(+). Its pathway is cofactor biosynthesis; phylloquinone biosynthesis. Methyltransferase required for the conversion of 2-phytyl-1,4-beta-naphthoquinol to phylloquinol. This Trichormus variabilis (strain ATCC 29413 / PCC 7937) (Anabaena variabilis) protein is 2-phytyl-1,4-naphtoquinone methyltransferase.